We begin with the raw amino-acid sequence, 94 residues long: ATP-dependent Clp protease adapter protein ClpS (94 aa).

The protein belongs to the ClpS family. Binds to the N-terminal domain of the chaperone ClpA.

Its function is as follows. Involved in the modulation of the specificity of the ClpAP-mediated ATP-dependent protein degradation. In Thermosynechococcus vestitus (strain NIES-2133 / IAM M-273 / BP-1), this protein is ATP-dependent Clp protease adapter protein ClpS.